We begin with the raw amino-acid sequence, 431 residues long: CCA tRNA nucleotidyltransferase 1, mitochondrial (431 aa).

The transit peptide at 1 to 31 (MWAKLFLRPSFVNRVHLTWSCRALLTMQLKT) directs the protein to the mitochondrion. Glycine 61 and arginine 64 together coordinate ATP. CTP is bound by residues glycine 61 and arginine 64. 2 residues coordinate Mg(2+): aspartate 74 and aspartate 76. Positions 148, 191, 194, 197, and 200 each coordinate ATP. CTP-binding residues include arginine 148, aspartate 191, arginine 194, arginine 197, and arginine 200.

The protein belongs to the tRNA nucleotidyltransferase/poly(A) polymerase family. As to quaternary structure, monomer, and homodimer. Mg(2+) serves as cofactor. Expressed ubiquitously during early embryogenesis.

It is found in the mitochondrion. The protein resides in the cytoplasm. It localises to the nucleus. The catalysed reaction is a tRNA precursor + 2 CTP + ATP = a tRNA with a 3' CCA end + 3 diphosphate. It catalyses the reaction a tRNA with a 3' CCA end + 2 CTP + ATP = a tRNA with a 3' CCACCA end + 3 diphosphate. Its function is as follows. Nucleotidyltransferase that catalyzes the addition and repair of the essential 3'-terminal CCA sequence in tRNAs, which is necessary for the attachment of amino acids to the 3' terminus of tRNA molecules, using CTP and ATP as substrates. tRNA 3'-terminal CCA addition is required both for tRNA processing and repair. Promotes tRNA repair and recycling downstream of the ribosome-associated quality control (RQC) pathway by mediating addition of the tRNA 3'-terminal CCA following cleavage by ankzf1 and repair by elac1. Also involved in tRNA surveillance by mediating tandem CCA addition to generate a CCACCA at the 3' terminus of unstable tRNAs and tRNA-like transcripts. While stable tRNAs receive only 3'-terminal CCA, unstable tRNAs beginning with GG are marked with CCACCA and rapidly degraded. The structural flexibility of RNA controls the choice between CCA versus CCACCA addition: following the first CCA addition cycle, nucleotide-binding to the active site triggers a clockwise screw motion, producing torque on the RNA. This ejects stable RNAs, whereas unstable RNAs are refolded while bound to the enzyme and subjected to a second CCA catalytic cycle. The chain is CCA tRNA nucleotidyltransferase 1, mitochondrial from Danio rerio (Zebrafish).